A 142-amino-acid chain; its full sequence is Large ribosomal subunit protein uL13 (142 aa).

The protein belongs to the universal ribosomal protein uL13 family. As to quaternary structure, part of the 50S ribosomal subunit.

Its function is as follows. This protein is one of the early assembly proteins of the 50S ribosomal subunit, although it is not seen to bind rRNA by itself. It is important during the early stages of 50S assembly. The protein is Large ribosomal subunit protein uL13 of Shewanella amazonensis (strain ATCC BAA-1098 / SB2B).